A 300-amino-acid polypeptide reads, in one-letter code: D-alanine--D-alanine ligase (300 aa).

Residues 99 to 293 form the ATP-grasp domain; that stretch reads KKILKYANIN…FAELLNSIVK (195 aa). 126 to 181 contacts ATP; it reads IEKIGYPVFVKPNSGGSSVATNLVKDGDGIKEAVELALKYDKEVMIENYTKGEEIT. D248, E260, and N262 together coordinate Mg(2+).

Belongs to the D-alanine--D-alanine ligase family. Requires Mg(2+) as cofactor. Mn(2+) serves as cofactor.

Its subcellular location is the cytoplasm. It carries out the reaction 2 D-alanine + ATP = D-alanyl-D-alanine + ADP + phosphate + H(+). It functions in the pathway cell wall biogenesis; peptidoglycan biosynthesis. Its function is as follows. Cell wall formation. This is D-alanine--D-alanine ligase from Clostridium botulinum (strain 657 / Type Ba4).